A 148-amino-acid polypeptide reads, in one-letter code: Cytochrome c oxidase subunit 6, mitochondrial (148 aa).

A mitochondrion-targeting transit peptide spans 1 to 40; the sequence is MLSRAIFRNPVINRTLLRARPGAYHATRLTKNTFIQSRKY.

It belongs to the cytochrome c oxidase subunit 5A family. In terms of assembly, component of the cytochrome c oxidase (complex IV, CIV), a multisubunit enzyme composed of 12 subunits. The complex is composed of a catalytic core of 3 subunits COX1, COX2 and COX3, encoded in the mitochondrial DNA, and 9 supernumerary subunits COX4, COX5A (or COX5B), COX6, COX7, COX8, COX9, COX12, COX13 and COX26, which are encoded in the nuclear genome. The complex exists as a monomer or a dimer and forms supercomplexes (SCs) in the inner mitochondrial membrane with a dimer of ubiquinol-cytochrome c oxidoreductase (cytochrome b-c1 complex, complex III, CIII), resulting in 2 different assemblies (supercomplexes III(2)IV and III(2)IV(2)). COX26 interacts with COX1, COX2, COX6 and COX9.

It is found in the mitochondrion inner membrane. It participates in energy metabolism; oxidative phosphorylation. Its function is as follows. Component of the cytochrome c oxidase, the last enzyme in the mitochondrial electron transport chain which drives oxidative phosphorylation. The respiratory chain contains 3 multisubunit complexes succinate dehydrogenase (complex II, CII), ubiquinol-cytochrome c oxidoreductase (cytochrome b-c1 complex, complex III, CIII) and cytochrome c oxidase (complex IV, CIV), that cooperate to transfer electrons derived from NADH and succinate to molecular oxygen, creating an electrochemical gradient over the inner membrane that drives transmembrane transport and the ATP synthase. Cytochrome c oxidase is the component of the respiratory chain that catalyzes the reduction of oxygen to water. Electrons originating from reduced cytochrome c in the intermembrane space (IMS) are transferred via the dinuclear copper A center (CU(A)) of COX2 and heme A of COX1 to the active site in COX1, a binuclear center (BNC) formed by heme A3 and copper B (CU(B)). The BNC reduces molecular oxygen to 2 water molecules using 4 electrons from cytochrome c in the IMS and 4 protons from the mitochondrial matrix. COX6 may stabilize the region of CIV at the interface with CIII, supporting a role in formation or stability of the CIII(2)IV(2) SC. This chain is Cytochrome c oxidase subunit 6, mitochondrial (COX6), found in Saccharomyces cerevisiae (strain ATCC 204508 / S288c) (Baker's yeast).